A 136-amino-acid chain; its full sequence is UPF0102 protein BBta_0181 (136 aa).

It belongs to the UPF0102 family.

The protein is UPF0102 protein BBta_0181 of Bradyrhizobium sp. (strain BTAi1 / ATCC BAA-1182).